Here is a 195-residue protein sequence, read N- to C-terminus: Myelin-associated neurite-outgrowth inhibitor (195 aa).

Residues 1–18 lie on the Cytoplasmic side of the membrane; it reads MNPVYSPASSGVPYANPK. The chain crosses the membrane as a helical span at residues 19–43; it reads GIGYPAGFPVGYAAAAPAYSPSMYP. At 44 to 143 the chain is on the extracellular side; the sequence is GANPAFPSGY…APPIPPPRPN (100 aa). The chain crosses the membrane as a helical span at residues 144–163; sequence GVTMGMVGGTTMAMSAGTLL. The Cytoplasmic segment spans residues 164–195; that stretch reads TTHSPTPVAPHPSMPTYRQPATPTYSYVPPQW.

The protein belongs to the FAM168 family.

It is found in the cytoplasm. The protein resides in the perinuclear region. Its subcellular location is the cell membrane. The protein localises to the cell projection. It localises to the axon. Inhibitor of neuronal axonal outgrowth. The sequence is that of Myelin-associated neurite-outgrowth inhibitor (fam168b) from Danio rerio (Zebrafish).